We begin with the raw amino-acid sequence, 356 residues long: Trans-enoyl reductase pgmF (356 aa).

NADP(+) contacts are provided by residues 57-60, 175-178, 198-201, Y216, 261-262, and 342-343; these read VDFK, SGGC, STPN, VG, and AK.

It belongs to the zinc-containing alcohol dehydrogenase family.

Functionally, FAD-linked oxidoreductase; part of the gene cluster that mediates the biosynthesis of pleosporalin A, ascomycone A, as well as a third cryptic naphthoquinone derived pigment, all responsible for the coloration of conidia. The pathway begins with the biosynthesis of the cyclized heptaketide 3-acetonyl-1,6,8-trihydroxy-2-naphthaldehyde by the NR-PKS pgmA. The C-6 hydroxyl group is further methylated by the O-methyltransferase pgmB to yield fusarubinaldehyde which is in turn oxidized by the cytochrome P450 monooxygenase pgmC at C-9. The C-1 hydroxyl group is then methylated spontaneously. Although pgmE, pgmD and pgmH are essential for the production of pleosporalin A, it is not the case for the 2 other final products and it remains difficult to assign a specific function to each enzyme. PgmF and pgmG seem not to be involved in pigment biosynthesis although they were regulated by the cluster-specific transcription factor pgmR. The chain is Trans-enoyl reductase pgmF from Aspergillus terreus.